The following is a 186-amino-acid chain: MSSLADTIHIENVVASSDLGQELALDQLATDLDGAEYNPEDFPGVVYRLQEPKSATLIFRSGKVVCTGAKSVDAVHDALEIVFDDLRELGIDVDSTPPVKVQNIVSSASLEQSLNLNAIAIGLGLEQIEYEPEQFPGLVYRLDDPDVVVLLFGSGKLVITGAAESADAQHALAHVNDRLTELGLLE.

Repeat copies occupy residues Ile10–Leu86 and Val101–Leu179.

It belongs to the TBP family.

In terms of biological role, general factor that plays a role in the activation of archaeal genes transcribed by RNA polymerase. Binds specifically to the TATA box promoter element which lies close to the position of transcription initiation. The polypeptide is TATA-box-binding protein F (tbpF) (Halobacterium salinarum (strain ATCC 700922 / JCM 11081 / NRC-1) (Halobacterium halobium)).